Consider the following 360-residue polypeptide: Lipid-A-disaccharide synthase (360 aa).

The protein belongs to the LpxB family.

It catalyses the reaction a lipid X + a UDP-2-N,3-O-bis[(3R)-3-hydroxyacyl]-alpha-D-glucosamine = a lipid A disaccharide + UDP + H(+). It participates in bacterial outer membrane biogenesis; LPS lipid A biosynthesis. Its function is as follows. Condensation of UDP-2,3-diacylglucosamine and 2,3-diacylglucosamine-1-phosphate to form lipid A disaccharide, a precursor of lipid A, a phosphorylated glycolipid that anchors the lipopolysaccharide to the outer membrane of the cell. In Helicobacter pylori (strain P12), this protein is Lipid-A-disaccharide synthase.